Consider the following 167-residue polypeptide: Fluoride-specific ion channel FluC (167 aa).

4 consecutive transmembrane segments (helical) span residues 32 to 52, 69 to 89, 102 to 122, and 137 to 157; these read HVTP…GALA, IGTL…IAYV, FMIT…AELF, and LGLH…TIGL. The Na(+) site is built by glycine 109 and serine 112.

It belongs to the fluoride channel Fluc/FEX (TC 1.A.43) family.

The protein resides in the cell inner membrane. It catalyses the reaction fluoride(in) = fluoride(out). Na(+) is not transported, but it plays an essential structural role and its presence is essential for fluoride channel function. Fluoride-specific ion channel. Important for reducing fluoride concentration in the cell, thus reducing its toxicity. This Xanthomonas oryzae pv. oryzae (strain KACC10331 / KXO85) protein is Fluoride-specific ion channel FluC.